The chain runs to 481 residues: UDP-N-acetylmuramate--L-alanine ligase (481 aa).

Residue 126–132 (GTHGKTT) coordinates ATP.

This sequence belongs to the MurCDEF family.

Its subcellular location is the cytoplasm. The enzyme catalyses UDP-N-acetyl-alpha-D-muramate + L-alanine + ATP = UDP-N-acetyl-alpha-D-muramoyl-L-alanine + ADP + phosphate + H(+). It functions in the pathway cell wall biogenesis; peptidoglycan biosynthesis. Cell wall formation. In Marinobacter nauticus (strain ATCC 700491 / DSM 11845 / VT8) (Marinobacter aquaeolei), this protein is UDP-N-acetylmuramate--L-alanine ligase.